The primary structure comprises 214 residues: MSITLALSKGRIFEETLPLLKAAGIEVTEDPETSRKLILPTNRPDVRVVLVRATDVPTYVQHGGADLGVVGLDVLLEHGGQGLYQPLDLRIAKCRMSVAVRADFDYAAAVKQGSRIRVATKYVSVARDHFADKGVHVDLIKLYGSMELAPLTGLADAIVDLVSTGSTLKANHLLEVERIMDISSRLVVNQAALKLKREAIRPLIDAFAAAIPQE.

The protein belongs to the ATP phosphoribosyltransferase family. Short subfamily. As to quaternary structure, heteromultimer composed of HisG and HisZ subunits.

Its subcellular location is the cytoplasm. The catalysed reaction is 1-(5-phospho-beta-D-ribosyl)-ATP + diphosphate = 5-phospho-alpha-D-ribose 1-diphosphate + ATP. It participates in amino-acid biosynthesis; L-histidine biosynthesis; L-histidine from 5-phospho-alpha-D-ribose 1-diphosphate: step 1/9. Its function is as follows. Catalyzes the condensation of ATP and 5-phosphoribose 1-diphosphate to form N'-(5'-phosphoribosyl)-ATP (PR-ATP). Has a crucial role in the pathway because the rate of histidine biosynthesis seems to be controlled primarily by regulation of HisG enzymatic activity. The protein is ATP phosphoribosyltransferase of Methylibium petroleiphilum (strain ATCC BAA-1232 / LMG 22953 / PM1).